The primary structure comprises 185 residues: NADH-quinone oxidoreductase subunit B (185 aa).

The [4Fe-4S] cluster site is built by cysteine 38, cysteine 39, cysteine 104, and cysteine 133.

The protein belongs to the complex I 20 kDa subunit family. NDH-1 is composed of 14 different subunits. Subunits NuoB, C, D, E, F, and G constitute the peripheral sector of the complex. The cofactor is [4Fe-4S] cluster.

It is found in the cell membrane. It catalyses the reaction a quinone + NADH + 5 H(+)(in) = a quinol + NAD(+) + 4 H(+)(out). Its function is as follows. NDH-1 shuttles electrons from NADH, via FMN and iron-sulfur (Fe-S) centers, to quinones in the respiratory chain. The immediate electron acceptor for the enzyme in this species is believed to be a menaquinone. Couples the redox reaction to proton translocation (for every two electrons transferred, four hydrogen ions are translocated across the cytoplasmic membrane), and thus conserves the redox energy in a proton gradient. The sequence is that of NADH-quinone oxidoreductase subunit B from Cutibacterium acnes (strain DSM 16379 / KPA171202) (Propionibacterium acnes).